The primary structure comprises 376 residues: N-acetyldiaminopimelate deacetylase (376 aa).

Asp70 is a catalytic residue. Glu129 serves as the catalytic Proton acceptor.

This sequence belongs to the peptidase M20A family. N-acetyldiaminopimelate deacetylase subfamily.

The catalysed reaction is N-acetyl-(2S,6S)-2,6-diaminopimelate + H2O = (2S,6S)-2,6-diaminopimelate + acetate. It participates in amino-acid biosynthesis; L-lysine biosynthesis via DAP pathway; LL-2,6-diaminopimelate from (S)-tetrahydrodipicolinate (acetylase route): step 3/3. Catalyzes the conversion of N-acetyl-diaminopimelate to diaminopimelate and acetate. The sequence is that of N-acetyldiaminopimelate deacetylase from Bacillus pumilus (strain SAFR-032).